The primary structure comprises 380 residues: Succinyl-diaminopimelate desuccinylase (380 aa).

His-69 contributes to the Zn(2+) binding site. Asp-71 is a catalytic residue. Asp-102 contributes to the Zn(2+) binding site. Glu-135 functions as the Proton acceptor in the catalytic mechanism. Glu-136, Glu-164, and His-353 together coordinate Zn(2+).

The protein belongs to the peptidase M20A family. DapE subfamily. As to quaternary structure, homodimer. It depends on Zn(2+) as a cofactor. Requires Co(2+) as cofactor.

The enzyme catalyses N-succinyl-(2S,6S)-2,6-diaminopimelate + H2O = (2S,6S)-2,6-diaminopimelate + succinate. The protein operates within amino-acid biosynthesis; L-lysine biosynthesis via DAP pathway; LL-2,6-diaminopimelate from (S)-tetrahydrodipicolinate (succinylase route): step 3/3. Functionally, catalyzes the hydrolysis of N-succinyl-L,L-diaminopimelic acid (SDAP), forming succinate and LL-2,6-diaminopimelate (DAP), an intermediate involved in the bacterial biosynthesis of lysine and meso-diaminopimelic acid, an essential component of bacterial cell walls. The polypeptide is Succinyl-diaminopimelate desuccinylase (Cereibacter sphaeroides (strain ATCC 17023 / DSM 158 / JCM 6121 / CCUG 31486 / LMG 2827 / NBRC 12203 / NCIMB 8253 / ATH 2.4.1.) (Rhodobacter sphaeroides)).